Reading from the N-terminus, the 359-residue chain is Ribosomal RNA small subunit methyltransferase H (359 aa).

Residues 39–41 (AGH), D58, F87, D108, and Q115 each bind S-adenosyl-L-methionine. Positions 339–359 (IQGSASPGRAKNTARIRTRRG) are disordered. Over residues 350-359 (NTARIRTRRG) the composition is skewed to basic residues.

Belongs to the methyltransferase superfamily. RsmH family.

It is found in the cytoplasm. It catalyses the reaction cytidine(1402) in 16S rRNA + S-adenosyl-L-methionine = N(4)-methylcytidine(1402) in 16S rRNA + S-adenosyl-L-homocysteine + H(+). Functionally, specifically methylates the N4 position of cytidine in position 1402 (C1402) of 16S rRNA. In Bifidobacterium longum (strain DJO10A), this protein is Ribosomal RNA small subunit methyltransferase H.